A 429-amino-acid chain; its full sequence is Glutamate-1-semialdehyde 2,1-aminomutase (429 aa).

The residue at position 265 (Lys-265) is an N6-(pyridoxal phosphate)lysine.

Belongs to the class-III pyridoxal-phosphate-dependent aminotransferase family. HemL subfamily. Homodimer. Pyridoxal 5'-phosphate is required as a cofactor.

It is found in the cytoplasm. It catalyses the reaction (S)-4-amino-5-oxopentanoate = 5-aminolevulinate. The protein operates within porphyrin-containing compound metabolism; protoporphyrin-IX biosynthesis; 5-aminolevulinate from L-glutamyl-tRNA(Glu): step 2/2. The sequence is that of Glutamate-1-semialdehyde 2,1-aminomutase from Shewanella halifaxensis (strain HAW-EB4).